The chain runs to 163 residues: Anthranilate 1,2-dioxygenase small subunit (163 aa).

This sequence belongs to the bacterial ring-hydroxylating dioxygenase beta subunit family. The anthranilate dioxygenase (AntDO) multicomponent enzyme system is composed of an oxygenase component and a NADH:acceptor reductase component (AntC). The oxygenase component is a heterohexamer of 3 large (AntA) and 3 small (AntB) subunits.

It catalyses the reaction anthranilate + NADH + O2 + 3 H(+) = catechol + NH4(+) + CO2 + NAD(+). It carries out the reaction anthranilate + NADPH + O2 + 3 H(+) = catechol + NH4(+) + CO2 + NADP(+). Its pathway is aromatic compound metabolism; anthranilate degradation via hydroxylation; catechol from anthranilate: step 1/1. Component of anthranilate dioxygenase multicomponent enzyme system which catalyzes the incorporation of both atoms of molecular oxygen into anthranilate to form catechol. The chain is Anthranilate 1,2-dioxygenase small subunit from Acinetobacter baylyi (strain ATCC 33305 / BD413 / ADP1).